We begin with the raw amino-acid sequence, 836 residues long: Protein-glutamine gamma-glutamyltransferase K (836 aa).

Positions 1–33 (MDGPRSDMGRSDVSRSDMSRSDMGRSDMGRSDV) are enriched in basic and acidic residues. 2 disordered regions span residues 1-68 (MDGP…SRGG) and 89-125 (DDWG…DGTI). At Thr-46 the chain carries Phosphothreonine. Residues Ser-48, Ser-98, and Ser-112 each carry the phosphoserine modification. The span at 89 to 112 (DDWGREPSDSRDRGSSSRGGRPDS) shows a compositional bias: basic and acidic residues. Active-site residues include Cys-397, His-456, and Asp-479. Residues Asn-519, Asp-521, Glu-568, and Glu-573 each coordinate Ca(2+). Ser-824 bears the Phosphoserine mark.

The protein belongs to the transglutaminase superfamily. Transglutaminase family. As to quaternary structure, interacts with PLAAT4. The cofactor is Ca(2+). Post-translationally, palmitoylated. The membrane anchorage region possesses a cluster of five cysteines within which fatty acid(s) may become thioester-linked. It is subject to phorbol ester-stimulated phosphorylation and is hypersensitive to proteolysis, which releases the enzyme in a soluble form. In terms of processing, tyrosine-phosphorylated.

It localises to the membrane. The enzyme catalyses L-glutaminyl-[protein] + L-lysyl-[protein] = [protein]-L-lysyl-N(6)-5-L-glutamyl-[protein] + NH4(+). Inhibited by retinoic acid, but phorbol ester treatment activates it. Its function is as follows. Catalyzes the cross-linking of proteins and the conjugation of polyamines to proteins. Responsible for cross-linking epidermal proteins during formation of the stratum corneum. Involved in cell proliferation. In Oryctolagus cuniculus (Rabbit), this protein is Protein-glutamine gamma-glutamyltransferase K (TGM1).